Reading from the N-terminus, the 924-residue chain is Type II inositol 3,4-bisphosphate 4-phosphatase (924 aa).

Residues 1 to 13 show a composition bias toward basic and acidic residues; sequence MEIKEEGASEEGQ. Disordered regions lie at residues 1-25, 481-516, and 546-569; these read MEIKEEGASEEGQHFLPTAQASDPG, ILKKPPSPKSSTEESSPQDQPPLMRGQDSIPHHSDY, and DGGSEGSGGNNDGEKEPSLADAIP. The C2 domain maps to 23–165; the sequence is DPGDCQFTSI…LKSKEQLLVL (143 aa).

It belongs to the inositol 3,4-bisphosphate 4-phosphatase family.

It carries out the reaction a 1,2-diacyl-sn-glycero-3-phospho-(1D-myo-inositol-3,4-bisphosphate) + H2O = a 1,2-diacyl-sn-glycero-3-phospho-(1D-myo-inositol-3-phosphate) + phosphate. The enzyme catalyses 1D-myo-inositol 1,3,4-trisphosphate + H2O = 1D-myo-inositol 1,3-bisphosphate + phosphate. The catalysed reaction is 1D-myo-inositol 3,4-bisphosphate + H2O = 1D-myo-inositol 3-phosphate + phosphate. It participates in signal transduction; phosphatidylinositol signaling pathway. With respect to regulation, strongly inhibited by inositol hexakisphosphate. Its function is as follows. Catalyzes the hydrolysis of the 4-position phosphate of phosphatidylinositol 3,4-bisphosphate, inositol 1,3,4-trisphosphate and inositol 3,4-bisphosphate. Plays a role in the late stages of macropinocytosis by dephosphorylating phosphatidylinositol 3,4-bisphosphate in membrane ruffles. Antagonizes the PI3K-AKT/PKB signaling pathway by dephosphorylating phosphoinositides and thereby modulating cell cycle progression and cell survival. In Pongo abelii (Sumatran orangutan), this protein is Type II inositol 3,4-bisphosphate 4-phosphatase (INPP4B).